Here is a 256-residue protein sequence, read N- to C-terminus: MVKSHIGSWILVLFVAMWSDVGLCKKRPKPGGGWNTGGSRYPGQGSPGGNRYPPQGGGGWGQPHGGGWGQPHGGGWGQPHGGGWGQPHGGGGWGQGGTHSQWNKPSKPKTNMKHVAGAAAAGAVVGGLGGYMLGSAMSRPLIHFGNDYEDRYYRENMYRYPNQVYYRPVDQYNNQNTFVHDCVNITVKQHTVTTTTKGENFTETDIKMMERVVEQMCITQYQRESEAYYQRGASVILFSSPPVILLISFLIFLIVG.

Residues 1 to 24 form the signal peptide; the sequence is MVKSHIGSWILVLFVAMWSDVGLC. Residues 25–233 are interaction with GRB2, ERI3 and SYN1; that stretch reads KKRPKPGGGW…ESEAYYQRGA (209 aa). Residues 28 to 110 are disordered; the sequence is PKPGGGWNTG…QWNKPSKPKT (83 aa). Repeat copies occupy residues 54 to 62, 63 to 70, 71 to 78, 79 to 86, and 87 to 95. The interval 54–95 is 5 X 8 AA tandem repeats of P-H-G-G-G-W-G-Q; sequence PQGGGGWGQPHGGGWGQPHGGGWGQPHGGGWGQPHGGGGWGQ. Gly residues predominate over residues 55–97; the sequence is QGGGGWGQPHGGGWGQPHGGGWGQPHGGGWGQPHGGGGWGQGG. The Cu(2+) site is built by H64, G65, G66, H72, G73, G74, H80, G81, G82, H88, G90, and G91. C182 and C217 are disulfide-bonded. Residues N184 and N200 are each glycosylated (N-linked (GlcNAc...) asparagine). A233 is lipidated: GPI-anchor amidated alanine. A propeptide spans 234-256 (removed in mature form); the sequence is SVILFSSPPVILLISFLIFLIVG.

Belongs to the prion family. As to quaternary structure, monomer and homodimer. Has a tendency to aggregate into amyloid fibrils containing a cross-beta spine, formed by a steric zipper of superposed beta-strands. Soluble oligomers may represent an intermediate stage on the path to fibril formation. Copper binding may promote oligomerization. Interacts with GRB2, APP, ERI3/PRNPIP and SYN1. Mislocalized cytosolically exposed PrP interacts with MGRN1; this interaction alters MGRN1 subcellular location and causes lysosomal enlargement. Interacts with KIAA1191.

It is found in the cell membrane. The protein resides in the golgi apparatus. In terms of biological role, its primary physiological function is unclear. Has cytoprotective activity against internal or environmental stresses. May play a role in neuronal development and synaptic plasticity. May be required for neuronal myelin sheath maintenance. May play a role in iron uptake and iron homeostasis. Soluble oligomers are toxic to cultured neuroblastoma cells and induce apoptosis (in vitro). Association with GPC1 (via its heparan sulfate chains) targets PRNP to lipid rafts. Also provides Cu(2+) or Zn(2+) for the ascorbate-mediated GPC1 deaminase degradation of its heparan sulfate side chains. This Cervus elaphus (Red deer) protein is Major prion protein (PRNP).